The sequence spans 476 residues: MSTVLYRCPELLIGGEWRPGRHEQRLVVRNPATGEPLDELRLASADDLQLALQTTQQAFEHWRQVPAHERCARLERGVARLRENTERIAHLLTLEQGKTLAEARMECAMAADLIKWYAEEARRVYGRVIPARLPNSRMEVFKFPVGPVAAFSPWNFPLVLSARKLGGAIAAGCSIVLKAAEETPASVAAMVDCLNQELPPGVVQLLYGVPAEVSQALIASPVVRKVTFTGSVPVGRHLAELSARHLKRITLELGGHAPVIVCGDADIARTVNLMVQHKFRNAGQACLAPTRFFVDRRIYGDFVDAFGATQALRVGAGMAAETQMGPVASARRQAAVQDLIARSVAAGARPVASAVPEAGYFVAPTLLADVPLDAPVMSEEPFGPVACAVPFDSLDQAIAQANHNPYGLAGYLFTDSAKAILAVSERLEVGSLAVNGMGVSVPEAPFGGVKDSGYGSESGTEGMEAFLDTKFMHYVA.

Residues 154-155 (WN), 178-181 (KAAE), and 230-231 (GS) each bind NAD(+). Glu252 functions as the Proton acceptor in the catalytic mechanism. Position 253 (Leu253) interacts with NAD(+). Cys286 (nucleophile) is an active-site residue. Glu380 contributes to the NAD(+) binding site.

It belongs to the aldehyde dehydrogenase family. In terms of assembly, homodimer.

The catalysed reaction is 4-(hydroxymethyl)benzenesulfonate + NAD(+) = 4-formylbenzenesulfonate + NADH + H(+). Its function is as follows. Involved in the toluene-4-sulfonate degradation pathway. Does not discriminate between the sulfonate and the carboxyl substituents and can also be involved in the p-toluenecarboxylate degradation pathway. The chain is 4-(hydroxymethyl)benzenesulfonate dehydrogenase TsaD1 (tsaD1) from Comamonas testosteroni (Pseudomonas testosteroni).